We begin with the raw amino-acid sequence, 360 residues long: Metalloendoproteinase 5-MMP (360 aa).

The N-terminal stretch at 1–20 (MRTLLLTILIFFFTVNPISA) is a signal peptide. A propeptide spans 21-142 (KFYTNVSSIP…GGKILRTTEK (122 aa)) (activation peptide). N-linked (GlcNAc...) asparagine glycans are attached at residues asparagine 25, asparagine 36, and asparagine 78. The short motif at 117-124 (PRCGNPDL) is the Cysteine switch element. Cysteine 119 lines the Zn(2+) pocket. N-linked (GlcNAc...) asparagine glycosylation is found at asparagine 168 and asparagine 191. Histidine 270 serves as a coordination point for Zn(2+). Residue glutamate 271 is part of the active site. The Zn(2+) site is built by histidine 274 and histidine 280. Positions 312–336 (LYGGNPNGDGGGSKPSRESQSTGGD) are disordered. Serine 337 carries GPI-anchor amidated serine lipidation. Residues 338 to 360 (VRRWRGWMISLSSIATCIFLISV) constitute a propeptide, removed in mature form.

The protein belongs to the peptidase M10A family. Matrix metalloproteinases (MMPs) subfamily. It depends on Zn(2+) as a cofactor. In terms of tissue distribution, mostly expressed in leaves, roots and stems, and, to a lower extent, in flowers.

Its subcellular location is the cell membrane. Its activity is regulated as follows. Repressed by acetohydroxamic acid (AHA). Functionally, matrix metalloproteinases (MMPs) or matrixins may play a role in the degradation and remodeling of the extracellular matrix (ECM) during development or in response to stresses. Active on Mca-KESAbuNLFVLKDpaR-NH(2) (QF75) and, to some extent, on McaPLGLDpaAR-NH(2) (QF24), myelin basic protein (MBP) and beta-casein. The polypeptide is Metalloendoproteinase 5-MMP (Arabidopsis thaliana (Mouse-ear cress)).